Here is a 53-residue protein sequence, read N- to C-terminus: Chlorophyll a-b binding protein 1, chloroplastic (53 aa).

Phe18 contributes to the chlorophyll b binding site. Residues Glu48 and His51 each coordinate chlorophyll a. Position 53 (Arg53) interacts with chlorophyll b.

The protein belongs to the light-harvesting chlorophyll a/b-binding (LHC) protein family. In terms of assembly, the LHC complex consists of chlorophyll a-b binding proteins. Requires Binds at least 14 chlorophylls (8 Chl-a and 6 Chl-b) and carotenoids such as lutein and neoxanthin. as cofactor. Photoregulated by reversible phosphorylation of its threonine residues.

It localises to the plastid. Its subcellular location is the chloroplast thylakoid membrane. The light-harvesting complex (LHC) functions as a light receptor, it captures and delivers excitation energy to photosystems with which it is closely associated. The polypeptide is Chlorophyll a-b binding protein 1, chloroplastic (Populus euphratica (Euphrates poplar)).